The following is a 119-amino-acid chain: Methylglyoxal synthase (119 aa).

One can recognise an MGS-like domain in the interval 1–119; that stretch reads MKIALIAHDK…ESAKLIMADI (119 aa). Residues His-8, Lys-12, 34–37, and 54–55 each bind substrate; these read TGTT and SG. Asp-60 acts as the Proton donor/acceptor in catalysis. Residue His-87 participates in substrate binding.

The protein belongs to the methylglyoxal synthase family.

It catalyses the reaction dihydroxyacetone phosphate = methylglyoxal + phosphate. Its function is as follows. Catalyzes the formation of methylglyoxal from dihydroxyacetone phosphate. The sequence is that of Methylglyoxal synthase from Clostridium perfringens (strain ATCC 13124 / DSM 756 / JCM 1290 / NCIMB 6125 / NCTC 8237 / Type A).